Consider the following 463-residue polypeptide: Alpha-L-arabinofuranosidase B (463 aa).

An N-terminal signal peptide occupies residues 1–26 (MIPQLNRNYAWAIALGLVARSSLVSA). The tract at residues 27–308 (GPCDIYASGG…ILGIGGHNSK (282 aa)) is catalytic. Cysteines 29 and 39 form a disulfide. N-linked (GlcNAc...) asparagine glycosylation occurs at N81. Disulfide bonds link C89–C94 and C184–C185. D227 provides a ligand contact to substrate. E229 functions as the Nucleophile in the catalytic mechanism. Residue N230 participates in substrate binding. A glycan (N-linked (GlcNAc...) asparagine) is linked at N280. Residue G304 coordinates substrate. The segment at 309 to 463 (LTVGSSISLR…VSWVVSASFA (155 aa)) is ABD. A glycan (N-linked (GlcNAc...) asparagine) is linked at N332. An intrachain disulfide couples C366 to C404. Substrate contacts are provided by H381, N383, F384, H428, D430, L433, and D453.

Belongs to the glycosyl hydrolase 54 family. Post-translationally, residue Asn-280 is mannosylated with up to 7 mannose residues.

It is found in the secreted. It catalyses the reaction Hydrolysis of terminal non-reducing alpha-L-arabinofuranoside residues in alpha-L-arabinosides.. The protein operates within glycan metabolism; L-arabinan degradation. Functionally, secreted alpha-L-arabinofuranosidase that actively hydrolyzes p-NP-alpha-L-arabinofuranoside and is specific for furanose configuration of the carbohydrate ring. Also exhibits significant activity against polymeric arabinose-containing substrates such as arabinan and arabinoxylan, a major component of plant hemicellulose. The protein is Alpha-L-arabinofuranosidase B (abfB) of Penicillium canescens.